Reading from the N-terminus, the 337-residue chain is MIQIIYVASPESQQIHVWKLDSIYGLLELIQVIYTHGQAQPMAVHPNKRFLYVGIRPNFGITTYRIDQIGLLADHGTIGIFSSPTHLISDKKGAFLYCTSYRNNTVSVIPISMSGMLLDSPIQIIEGLLGCHSANIDKFKKLLWVPCLKENAIRLFNINSFGMLTSYDPSIIKINVGSGPRHMIFCDFDCYAYVINELTSTVDVIKYNNFQKIPSIVQTVSIIPKNISINRCWAADIHITPNGRWLYCTDRSINIISCLEISKKTKKLKFVGYQLTEEQPRGFAIDYQGKFLVVAGQKSNCISLYKIDSDNGTLTMLSRYSSGKGPMWVSIITLNCK.

It belongs to the cycloisomerase 2 family.

The enzyme catalyses 6-phospho-D-glucono-1,5-lactone + H2O = 6-phospho-D-gluconate + H(+). It functions in the pathway carbohydrate degradation; pentose phosphate pathway; D-ribulose 5-phosphate from D-glucose 6-phosphate (oxidative stage): step 2/3. Its function is as follows. Catalyzes the hydrolysis of 6-phosphogluconolactone to 6-phosphogluconate. The sequence is that of 6-phosphogluconolactonase from Blochmanniella pennsylvanica (strain BPEN).